The following is a 486-amino-acid chain: Glutamyl-tRNA(Gln) amidotransferase subunit A (486 aa).

Residues Lys76 and Ser151 each act as charge relay system in the active site. Ser175 serves as the catalytic Acyl-ester intermediate.

This sequence belongs to the amidase family. GatA subfamily. In terms of assembly, heterotrimer of A, B and C subunits.

The catalysed reaction is L-glutamyl-tRNA(Gln) + L-glutamine + ATP + H2O = L-glutaminyl-tRNA(Gln) + L-glutamate + ADP + phosphate + H(+). Allows the formation of correctly charged Gln-tRNA(Gln) through the transamidation of misacylated Glu-tRNA(Gln) in organisms which lack glutaminyl-tRNA synthetase. The reaction takes place in the presence of glutamine and ATP through an activated gamma-phospho-Glu-tRNA(Gln). In Nitrosomonas eutropha (strain DSM 101675 / C91 / Nm57), this protein is Glutamyl-tRNA(Gln) amidotransferase subunit A.